The sequence spans 111 residues: MLKHQIKITINAIKKIKKLLLKKKNFKLKLRIFITGGGCSGFQYGFELEKITKKNDISIIQSGIEIIIDPISIQYLLGGKIDYIENLEGSKFVISNPNAKRTCGCGLSFSI.

Iron-sulfur cluster is bound by residues C39, C103, and C105.

It belongs to the HesB/IscA family. Homodimer. Iron-sulfur cluster serves as cofactor.

Its function is as follows. Required for insertion of 4Fe-4S clusters for at least IspG. This chain is Iron-sulfur cluster insertion protein ErpA, found in Buchnera aphidicola subsp. Cinara cedri (strain Cc).